The primary structure comprises 308 residues: Ribosomal RNA small subunit methyltransferase H (308 aa).

S-adenosyl-L-methionine is bound by residues 36–38 (GGH), D55, F86, D103, and Q110.

The protein belongs to the methyltransferase superfamily. RsmH family.

The protein resides in the cytoplasm. The enzyme catalyses cytidine(1402) in 16S rRNA + S-adenosyl-L-methionine = N(4)-methylcytidine(1402) in 16S rRNA + S-adenosyl-L-homocysteine + H(+). Functionally, specifically methylates the N4 position of cytidine in position 1402 (C1402) of 16S rRNA. This Helicobacter pylori (strain HPAG1) protein is Ribosomal RNA small subunit methyltransferase H.